Reading from the N-terminus, the 157-residue chain is Crossover junction endodeoxyribonuclease RuvC (157 aa).

Catalysis depends on residues Asp7, Glu67, and Asp139. 3 residues coordinate Mg(2+): Asp7, Glu67, and Asp139.

Belongs to the RuvC family. In terms of assembly, homodimer which binds Holliday junction (HJ) DNA. The HJ becomes 2-fold symmetrical on binding to RuvC with unstacked arms; it has a different conformation from HJ DNA in complex with RuvA. In the full resolvosome a probable DNA-RuvA(4)-RuvB(12)-RuvC(2) complex forms which resolves the HJ. The cofactor is Mg(2+).

It is found in the cytoplasm. It catalyses the reaction Endonucleolytic cleavage at a junction such as a reciprocal single-stranded crossover between two homologous DNA duplexes (Holliday junction).. The RuvA-RuvB-RuvC complex processes Holliday junction (HJ) DNA during genetic recombination and DNA repair. Endonuclease that resolves HJ intermediates. Cleaves cruciform DNA by making single-stranded nicks across the HJ at symmetrical positions within the homologous arms, yielding a 5'-phosphate and a 3'-hydroxyl group; requires a central core of homology in the junction. The consensus cleavage sequence is 5'-(A/T)TT(C/G)-3'. Cleavage occurs on the 3'-side of the TT dinucleotide at the point of strand exchange. HJ branch migration catalyzed by RuvA-RuvB allows RuvC to scan DNA until it finds its consensus sequence, where it cleaves and resolves the cruciform DNA. This is Crossover junction endodeoxyribonuclease RuvC from Prochlorococcus marinus (strain MIT 9312).